The following is a 588-amino-acid chain: Sentrin-specific protease 2 (588 aa).

Residues 28–31 (KRRR) carry the Nuclear localization signal motif. Ser-32 is modified (phosphoserine). Residues 47-52 (PAKRPR) carry the Nuclear localization signal motif. The axin-binding stretch occupies residues 72 to 381 (GFPFQLTTKP…EKEISNALGH (310 aa)). Residues 157 to 184 (EGYNRRPSGRRHSKSNPESSLPWKPQEQ) form a disordered region. A Nuclear export signal motif is present at residues 316 to 331 (LEPDLSEEVSARLRLG). Phosphoserine occurs at positions 332 and 343. Residues 394–558 (LRITRGDIQT…MFTCKYADYI (165 aa)) form a protease region. Active-site residues include His-477 and Asp-494. Catalysis depends on Cys-547, which acts as the Nucleophile.

The protein belongs to the peptidase C48 family. In terms of assembly, binds to SUMO2 and SUMO3. Interacts with the C-terminal domain of NUP153 via its N-terminus. Interacts with MTA1. Binds to AXIN1. Polyubiquitinated; which leads to proteasomal degradation. As to expression, ubiquitous. Highly expressed in brain, lung and testis.

Its subcellular location is the nucleus. The protein resides in the nuclear pore complex. It is found in the nucleus membrane. It localises to the cytoplasm. Its function is as follows. Protease that catalyzes two essential functions in the SUMO pathway. The first is the hydrolysis of an alpha-linked peptide bond at the C-terminal end of the small ubiquitin-like modifier (SUMO) propeptides, SUMO1, SUMO2 and SUMO3 leading to the mature form of the proteins. The second is the deconjugation of SUMO1, SUMO2 and SUMO3 from targeted proteins, by cleaving an epsilon-linked peptide bond between the C-terminal glycine of the mature SUMO and the lysine epsilon-amino group of the target protein. May down-regulate CTNNB1 levels and thereby modulate the Wnt pathway. Deconjugates SUMO2 from MTA1. Plays a dynamic role in adipogenesis by desumoylating and promoting the stabilization of CEBPB. Acts as a regulator of the cGAS-STING pathway by catalyzing desumoylation of CGAS and STING1 during the late phase of viral infection. The chain is Sentrin-specific protease 2 (Senp2) from Rattus norvegicus (Rat).